A 513-amino-acid chain; its full sequence is Maturase K (513 aa).

This sequence belongs to the intron maturase 2 family. MatK subfamily.

It is found in the plastid. The protein resides in the chloroplast. Functionally, usually encoded in the trnK tRNA gene intron. Probably assists in splicing its own and other chloroplast group II introns. This is Maturase K from Zea mays (Maize).